The sequence spans 288 residues: Beta-lactamase CARB-3 (288 aa).

Residues 1–17 (MKFLLAFSLLIPSVVFA) form the signal peptide. S65 functions as the Acyl-ester intermediate in the catalytic mechanism. C72 and C118 are joined by a disulfide. Position 229-231 (229-231 (RSG)) interacts with substrate.

Belongs to the class-A beta-lactamase family.

It carries out the reaction a beta-lactam + H2O = a substituted beta-amino acid. Hydrolyzes both carbenicillin and oxacillin. The polypeptide is Beta-lactamase CARB-3 (carB3) (Pseudomonas aeruginosa).